A 179-amino-acid polypeptide reads, in one-letter code: Putative ankyrin repeat protein RF_0922 (179 aa).

5 ANK repeats span residues lysine 5–isoleucine 34, asparagine 40–valine 72, asparagine 75–isoleucine 104, asparagine 110–isoleucine 139, and asparagine 145–isoleucine 174.

In Rickettsia felis (strain ATCC VR-1525 / URRWXCal2) (Rickettsia azadi), this protein is Putative ankyrin repeat protein RF_0922.